Here is a 204-residue protein sequence, read N- to C-terminus: FMN-dependent NADH:quinone oxidoreductase (204 aa).

FMN-binding positions include Ser10 and 16–18; that span reads SKS.

The protein belongs to the azoreductase type 1 family. Homodimer. The cofactor is FMN.

It carries out the reaction 2 a quinone + NADH + H(+) = 2 a 1,4-benzosemiquinone + NAD(+). It catalyses the reaction N,N-dimethyl-1,4-phenylenediamine + anthranilate + 2 NAD(+) = 2-(4-dimethylaminophenyl)diazenylbenzoate + 2 NADH + 2 H(+). Its function is as follows. Quinone reductase that provides resistance to thiol-specific stress caused by electrophilic quinones. In terms of biological role, also exhibits azoreductase activity. Catalyzes the reductive cleavage of the azo bond in aromatic azo compounds to the corresponding amines. This Ruegeria pomeroyi (strain ATCC 700808 / DSM 15171 / DSS-3) (Silicibacter pomeroyi) protein is FMN-dependent NADH:quinone oxidoreductase.